We begin with the raw amino-acid sequence, 270 residues long: Type III pantothenate kinase (270 aa).

11-18 (DAGNSRIK) contributes to the ATP binding site. Substrate contacts are provided by residues Tyr96 and 103–106 (GSDR). Catalysis depends on Asp105, which acts as the Proton acceptor. Thr129 is a binding site for ATP. Substrate is bound at residue Thr195.

The protein belongs to the type III pantothenate kinase family. Homodimer. The cofactor is NH4(+). K(+) serves as cofactor.

The protein resides in the cytoplasm. The catalysed reaction is (R)-pantothenate + ATP = (R)-4'-phosphopantothenate + ADP + H(+). It functions in the pathway cofactor biosynthesis; coenzyme A biosynthesis; CoA from (R)-pantothenate: step 1/5. Catalyzes the phosphorylation of pantothenate (Pan), the first step in CoA biosynthesis. The protein is Type III pantothenate kinase of Paraburkholderia phytofirmans (strain DSM 17436 / LMG 22146 / PsJN) (Burkholderia phytofirmans).